We begin with the raw amino-acid sequence, 427 residues long: Branched-chain-amino-acid aminotransferase, mitochondrial (427 aa).

The N-terminal 47 residues, 1–47, are a transit peptide targeting the mitochondrion; that stretch reads MSLMFLRRAGNIKGRNIRFALQRGSVGYSQQSSEACKNFLNTTQLRT. At Lys-256 the chain carries N6-(pyridoxal phosphate)lysine.

It belongs to the class-IV pyridoxal-phosphate-dependent aminotransferase family. The cofactor is pyridoxal 5'-phosphate.

The protein localises to the mitochondrion. It is found in the nucleus. Its subcellular location is the cytoplasm. It catalyses the reaction L-leucine + 2-oxoglutarate = 4-methyl-2-oxopentanoate + L-glutamate. The enzyme catalyses L-isoleucine + 2-oxoglutarate = (S)-3-methyl-2-oxopentanoate + L-glutamate. The catalysed reaction is L-valine + 2-oxoglutarate = 3-methyl-2-oxobutanoate + L-glutamate. Functionally, catalyzes the first reaction in the catabolism of the essential branched chain amino acids leucine, isoleucine, and valine. The polypeptide is Branched-chain-amino-acid aminotransferase, mitochondrial (eca39) (Schizosaccharomyces pombe (strain 972 / ATCC 24843) (Fission yeast)).